A 330-amino-acid chain; its full sequence is Aspartate--ammonia ligase (330 aa).

It belongs to the class-II aminoacyl-tRNA synthetase family. AsnA subfamily.

It is found in the cytoplasm. It carries out the reaction L-aspartate + NH4(+) + ATP = L-asparagine + AMP + diphosphate + H(+). Its pathway is amino-acid biosynthesis; L-asparagine biosynthesis; L-asparagine from L-aspartate (ammonia route): step 1/1. The chain is Aspartate--ammonia ligase from Photorhabdus laumondii subsp. laumondii (strain DSM 15139 / CIP 105565 / TT01) (Photorhabdus luminescens subsp. laumondii).